Reading from the N-terminus, the 820-residue chain is Potassium channel GORK (820 aa).

Over 1–69 the chain is Cytoplasmic; sequence MGRLRRRQEI…PKNRWYKAWE (69 aa). Residues 70-90 traverse the membrane as a helical segment; that stretch reads MFILVWAIYSSLFTPMEFGFF. Topologically, residues 91 to 97 are extracellular; the sequence is RGLPERL. Residues 98–118 traverse the membrane as a helical segment; the sequence is FVLDIVGQIAFLVDIVLQFFV. Over 119-141 the chain is Cytoplasmic; the sequence is AYRDTQTYRTVYKPTRIAFRYLK. The helical transmembrane segment at 142–162 threads the bilayer; the sequence is SHFLMDFIGCFPWDLIYKASG. The Extracellular portion of the chain corresponds to 163 to 168; that stretch reads KHELVR. The chain crosses the membrane as a helical; Voltage-sensor span at residues 169-189; that stretch reads YLLWIRLFRVRKVVEFFQRLE. The Cytoplasmic segment spans residues 190–203; it reads KDTRINYLFTRILK. A helical transmembrane segment spans residues 204 to 224; that stretch reads LLFVEVYCTHTAACIFYYLAT. Over 225–259 the chain is Extracellular; the sequence is TLPPENEGYTWIGSLKLGDYSYENFREIDLWKRYT. The pore-forming intramembrane region spans 260–279; that stretch reads TALYFAIVTMATVGYGDIHA. The Extracellular portion of the chain corresponds to 280–285; that stretch reads VNLREM. Residues 286–306 form a helical membrane-spanning segment; the sequence is IFVMIYVSFDMVLGAYLIGNI. The Cytoplasmic portion of the chain corresponds to 307-820; the sequence is TALIVKGSNT…YMISDTTDQT (514 aa). Residue 386-508 coordinates a nucleoside 3',5'-cyclic phosphate; the sequence is LFKGCSTEFI…ILNNIMEEKE (123 aa). ANK repeat units follow at residues 528-559, 563-592, 596-625, 627-656, 660-689, and 693-722; these read EAEL…DPNK, DGRS…DVNL, FGHT…SFNL, DSGN…NPNS, DHRT…SVIS, and WGNS…AQSS. A KHA domain is found at 740–820; it reads KCTVFPFHPQ…YMISDTTDQT (81 aa).

Belongs to the potassium channel family. Plant (TC 1.A.1.4) subfamily. As to quaternary structure, the potassium channel is probably composed of a homo- or heterotetrameric complex of pore-forming subunits. In terms of tissue distribution, expressed in guard cell-containing tissues, in root epidermal cells and in root hairs. Detected in vascular cells of the root and shoot.

Its subcellular location is the membrane. Major selective outward-rectifying potassium channel of the guard cell membrane. Involved in regulation of stomatal movements according to the water status. Assuming opened or closed conformations in response to the voltage difference across the membrane, the channel is activated by depolarization. Conductance of the channel is modulated in a potassium-dependent fashion. May interact with the cytoskeleton or with regulatory proteins. The protein is Potassium channel GORK (GORK) of Arabidopsis thaliana (Mouse-ear cress).